Here is a 271-residue protein sequence, read N- to C-terminus: Tryptophan synthase alpha chain (271 aa).

Residues E59 and D70 each act as proton acceptor in the active site.

The protein belongs to the TrpA family. Tetramer of two alpha and two beta chains.

It catalyses the reaction (1S,2R)-1-C-(indol-3-yl)glycerol 3-phosphate + L-serine = D-glyceraldehyde 3-phosphate + L-tryptophan + H2O. Its pathway is amino-acid biosynthesis; L-tryptophan biosynthesis; L-tryptophan from chorismate: step 5/5. The alpha subunit is responsible for the aldol cleavage of indoleglycerol phosphate to indole and glyceraldehyde 3-phosphate. This is Tryptophan synthase alpha chain from Methanosarcina mazei (strain ATCC BAA-159 / DSM 3647 / Goe1 / Go1 / JCM 11833 / OCM 88) (Methanosarcina frisia).